Reading from the N-terminus, the 337-residue chain is Vacuolar protein sorting-associated protein 26B-A (337 aa).

Positions 313–337 (RFEGTSHPETRPQHSGAAAVEQEHE) are disordered.

Belongs to the VPS26 family. In terms of assembly, component of the heterotrimeric retromer cargo-selective complex (CSC) which is believed to associate with variable sorting nexins to form functionally distinct retromer complex variants.

The protein localises to the cytoplasm. It localises to the endosome membrane. It is found in the early endosome. Acts as a component of the retromer cargo-selective complex (CSC). The CSC is believed to be the core functional component of retromer or respective retromer complex variants acting to prevent missorting of selected transmembrane cargo proteins into the lysosomal degradation pathway. Retromer mediates retrograde transport of cargo proteins from endosomes to the trans-Golgi network (TGN). The protein is Vacuolar protein sorting-associated protein 26B-A (vps26b-a) of Xenopus laevis (African clawed frog).